Consider the following 250-residue polypeptide: Ribonuclease PH (250 aa).

Phosphate-binding positions include arginine 99 and 137 to 139 (GTR).

This sequence belongs to the RNase PH family. Homohexameric ring arranged as a trimer of dimers.

The enzyme catalyses tRNA(n+1) + phosphate = tRNA(n) + a ribonucleoside 5'-diphosphate. In terms of biological role, phosphorolytic 3'-5' exoribonuclease that plays an important role in tRNA 3'-end maturation. Removes nucleotide residues following the 3'-CCA terminus of tRNAs; can also add nucleotides to the ends of RNA molecules by using nucleoside diphosphates as substrates, but this may not be physiologically important. Probably plays a role in initiation of 16S rRNA degradation (leading to ribosome degradation) during starvation. The protein is Ribonuclease PH of Bordetella parapertussis (strain 12822 / ATCC BAA-587 / NCTC 13253).